We begin with the raw amino-acid sequence, 246 residues long: Flavin-dependent thymidylate synthase (246 aa).

Positions 17 to 241 (ITVELVKSAA…PLTHAAFNAN (225 aa)) constitute a ThyX domain. Residues Ser69, 92–94 (RHR), and Glu101 contribute to the FAD site. Residues 89–92 (EFMR), 101–105 (EESGR), and Arg173 each bind dUMP. The ThyX motif motif lies at 92–103 (RHRVGWSYNEES). Residues 189-191 (NAR) and His195 each bind FAD. Arg200 provides a ligand contact to dUMP. The active-site Involved in ionization of N3 of dUMP, leading to its activation is the Arg200.

It belongs to the thymidylate synthase ThyX family. As to quaternary structure, homotetramer. Requires FAD as cofactor.

It carries out the reaction dUMP + (6R)-5,10-methylene-5,6,7,8-tetrahydrofolate + NADPH + H(+) = dTMP + (6S)-5,6,7,8-tetrahydrofolate + NADP(+). It participates in pyrimidine metabolism; dTTP biosynthesis. In terms of biological role, catalyzes the reductive methylation of 2'-deoxyuridine-5'-monophosphate (dUMP) to 2'-deoxythymidine-5'-monophosphate (dTMP) while utilizing 5,10-methylenetetrahydrofolate (mTHF) as the methyl donor, and NADPH and FADH(2) as the reductant. This is Flavin-dependent thymidylate synthase from Streptomyces coelicolor (strain ATCC BAA-471 / A3(2) / M145).